A 188-amino-acid chain; its full sequence is Protein GrpE (188 aa).

A compositionally biased stretch (low complexity) spans 1–22 (MEENKQNQNLNTEETTEQQTEA). Residues 1–26 (MEENKQNQNLNTEETTEQQTEAETVE) form a disordered region.

Belongs to the GrpE family. In terms of assembly, homodimer.

It is found in the cytoplasm. Functionally, participates actively in the response to hyperosmotic and heat shock by preventing the aggregation of stress-denatured proteins, in association with DnaK and GrpE. It is the nucleotide exchange factor for DnaK and may function as a thermosensor. Unfolded proteins bind initially to DnaJ; upon interaction with the DnaJ-bound protein, DnaK hydrolyzes its bound ATP, resulting in the formation of a stable complex. GrpE releases ADP from DnaK; ATP binding to DnaK triggers the release of the substrate protein, thus completing the reaction cycle. Several rounds of ATP-dependent interactions between DnaJ, DnaK and GrpE are required for fully efficient folding. This is Protein GrpE from Exiguobacterium sibiricum (strain DSM 17290 / CCUG 55495 / CIP 109462 / JCM 13490 / 255-15).